The chain runs to 96 residues: UPF0235 protein YPN_3141 (96 aa).

Belongs to the UPF0235 family.

The sequence is that of UPF0235 protein YPN_3141 from Yersinia pestis bv. Antiqua (strain Nepal516).